The chain runs to 341 residues: Tetraacyldisaccharide 4'-kinase (341 aa).

54 to 61 (TVGGAGKT) contacts ATP.

Belongs to the LpxK family.

It catalyses the reaction a lipid A disaccharide + ATP = a lipid IVA + ADP + H(+). It participates in glycolipid biosynthesis; lipid IV(A) biosynthesis; lipid IV(A) from (3R)-3-hydroxytetradecanoyl-[acyl-carrier-protein] and UDP-N-acetyl-alpha-D-glucosamine: step 6/6. Its function is as follows. Transfers the gamma-phosphate of ATP to the 4'-position of a tetraacyldisaccharide 1-phosphate intermediate (termed DS-1-P) to form tetraacyldisaccharide 1,4'-bis-phosphate (lipid IVA). The protein is Tetraacyldisaccharide 4'-kinase of Brucella ovis (strain ATCC 25840 / 63/290 / NCTC 10512).